Consider the following 1770-residue polypeptide: Serine/threonine-protein kinase RIM15 (1770 aa).

Residues 334-358 (HSLSTFPQDNGNNNNNNNNNNNNNN) form a disordered region. Positions 343–358 (NGNNNNNNNNNNNNNN) are enriched in low complexity. 2 positions are modified to phosphoserine: S380 and S476. Disordered stretches follow at residues 530–563 (TPTA…LDSN) and 583–694 (STIS…NSVL). The span at 583-601 (STISIDRDNNTNSRGSSMK) shows a compositional bias: polar residues. A compositionally biased stretch (low complexity) spans 611–632 (SRTSNSERPSSSSSRLGIRSRS). A compositionally biased stretch (basic and acidic residues) spans 637–660 (QKIEYSHVDNDDRTNEMLSRDKDS). The segment covering 669–692 (TTITSSTQATTTGTKTNSNNSTNS) has biased composition (low complexity). A Phosphothreonine modification is found at T704. Residues S709, S733, S736, and S737 each carry the phosphoserine modification. At T747 the chain carries Phosphothreonine. In terms of domain architecture, Protein kinase spans 794–1254 (YDILKPISKG…IQEIKDHPYF (461 aa)). Residues 800–808 (ISKGAYGSV) and K823 each bind ATP. Catalysis depends on D918, which acts as the Proton acceptor. Residues 970-980 (NNFTMNNNNSN) show a composition bias toward low complexity. Positions 970 to 1032 (NNFTMNNNNS…MTPTPSTNTV (63 aa)) are disordered. Positions 981-990 (HSQLSTPDSF) are enriched in polar residues. The span at 1014–1031 (YSSTSNSHSMTPTPSTNT) shows a compositional bias: low complexity. Phosphoserine occurs at positions 1044, 1048, and 1064. T1075 bears the Phosphothreonine; by PHO85 mark. Positions 1255–1320 (KNVDWDHVYD…NTDVSELSAA (66 aa)) constitute an AGC-kinase C-terminal domain. A compositionally biased stretch (low complexity) spans 1378–1391 (TGYITPNGTGTTTT). The disordered stretch occupies residues 1378-1403 (TGYITPNGTGTTTTSAKNSPNLKNLS). Positions 1392–1401 (SAKNSPNLKN) are enriched in polar residues. The residue at position 1421 (S1421) is a Phosphoserine. Disordered stretches follow at residues 1448 to 1507 (KSEH…STFG) and 1519 to 1572 (FSTR…PANT). The span at 1463 to 1481 (SSASLMGSSSDGSVSTPGS) shows a compositional bias: low complexity. Residues S1531, S1538, S1542, and S1565 each carry the phosphoserine modification. One can recognise a Response regulatory domain in the interval 1636–1750 (DVLVCEPIPI…ELKKLVAKYA (115 aa)). The residue at position 1764 (S1764) is a Phosphoserine.

The protein belongs to the protein kinase superfamily. Ser/Thr protein kinase family. In terms of assembly, interacts with the cyclin-dependent kinase (CDK) PHO85 and IGO1. Post-translationally, autophosphorylated. Phosphorylation by PKA strongly inhibits kinase activity. Phosphorylation by cyclin-CDK PHO80-PHO85 under favorable growth condition causes inactivation of RIM15 by promoting its export to the cytoplasm.

Its subcellular location is the cytoplasm. The protein resides in the nucleus. The enzyme catalyses L-seryl-[protein] + ATP = O-phospho-L-seryl-[protein] + ADP + H(+). It catalyses the reaction L-threonyl-[protein] + ATP = O-phospho-L-threonyl-[protein] + ADP + H(+). With respect to regulation, kinase activity is inhibited by phosphorylation by cAMP-dependent protein kinase (PKA). Its function is as follows. Protein kinase that positively regulates proper entry into stationary phase of cells under nutrient starvation conditions. Involved in glycogen and trehalose accumulation, derepression of stress-induced genes, induction of thermotolerance and starvation resistance, and proper G1 cell cycle arrest. Also involved in the activation of a meiotic genes activation pathway. Phosphorylates IGO1 and IGO2, both involved in the TORC1 control of gene expression and chronological life span. The protein is Serine/threonine-protein kinase RIM15 (RIM15) of Saccharomyces cerevisiae (strain ATCC 204508 / S288c) (Baker's yeast).